A 268-amino-acid chain; its full sequence is 3-deoxy-manno-octulosonate cytidylyltransferase (268 aa).

This sequence belongs to the KdsB family.

Its subcellular location is the cytoplasm. The catalysed reaction is 3-deoxy-alpha-D-manno-oct-2-ulosonate + CTP = CMP-3-deoxy-beta-D-manno-octulosonate + diphosphate. It participates in nucleotide-sugar biosynthesis; CMP-3-deoxy-D-manno-octulosonate biosynthesis; CMP-3-deoxy-D-manno-octulosonate from 3-deoxy-D-manno-octulosonate and CTP: step 1/1. Its pathway is bacterial outer membrane biogenesis; lipopolysaccharide biosynthesis. Functionally, activates KDO (a required 8-carbon sugar) for incorporation into bacterial lipopolysaccharide in Gram-negative bacteria. This Psychrobacter arcticus (strain DSM 17307 / VKM B-2377 / 273-4) protein is 3-deoxy-manno-octulosonate cytidylyltransferase.